Reading from the N-terminus, the 224-residue chain is UPF0758 protein Maqu_3564 (224 aa).

The region spanning 102-224 is the MPN domain; that stretch reads PLRSPADTRR…VISLAERGLM (123 aa). Positions 173, 175, and 186 each coordinate Zn(2+). The short motif at 173 to 186 is the JAMM motif element; sequence HNHPSGVAEPSQAD.

This sequence belongs to the UPF0758 family.

The protein is UPF0758 protein Maqu_3564 of Marinobacter nauticus (strain ATCC 700491 / DSM 11845 / VT8) (Marinobacter aquaeolei).